The chain runs to 110 residues: Small ribosomal subunit protein mS33 (110 aa).

Basic residues predominate over residues 84-95 (KRRGKGAPKKMK). Residues 84 to 110 (KRRGKGAPKKMKKDAAATAKGKGKKKK) form a disordered region.

The protein belongs to the mitochondrion-specific ribosomal protein mS33 family. As to quaternary structure, component of the mitochondrial small ribosomal subunit (mt-SSU). Mature yeast 74S mitochondrial ribosomes consist of a small (37S) and a large (54S) subunit. The 37S small subunit contains a 15S ribosomal RNA (15S mt-rRNA) and 34 different proteins. The 54S large subunit contains a 21S rRNA (21S mt-rRNA) and 46 different proteins.

The protein resides in the mitochondrion. Functionally, component of the mitochondrial ribosome (mitoribosome), a dedicated translation machinery responsible for the synthesis of mitochondrial genome-encoded proteins, including at least some of the essential transmembrane subunits of the mitochondrial respiratory chain. The mitoribosomes are attached to the mitochondrial inner membrane and translation products are cotranslationally integrated into the membrane. The chain is Small ribosomal subunit protein mS33 (RSM27) from Saccharomyces cerevisiae (strain ATCC 204508 / S288c) (Baker's yeast).